The primary structure comprises 353 residues: Chloroplastic lipocalin (353 aa).

The segment covering 1 to 18 (MILLSSSISLSRPVSSQS) has biased composition (low complexity). The interval 1 to 27 (MILLSSSISLSRPVSSQSFSPPAATST) is disordered. Residues 1–39 (MILLSSSISLSRPVSSQSFSPPAATSTRRSHSSVTVKCC) constitute a chloroplast transit peptide. The cysteines at positions 163 and 299 are disulfide-linked.

The protein belongs to the calycin superfamily. Lipocalin family. As to expression, expressed in leaves at low levels (at protein levels). Present in seeds.

The protein resides in the plastid. The protein localises to the chloroplast thylakoid lumen. In terms of biological role, lipocalin that prevents thylakoidal membrane lipids peroxidation and confers protection against oxidative stress, especially mediated by singlet oxygen in response to high light and other stress (e.g. heat shocks). Required for seed longevity by ensuring polyunsaturated lipids integrity. The sequence is that of Chloroplastic lipocalin from Arabidopsis thaliana (Mouse-ear cress).